The primary structure comprises 631 residues: Interferon-induced GTP-binding protein Mx1 (631 aa).

One can recognise a Dynamin-type G domain in the interval 33-306 (DLALPAIAVI…LTSHICKSLP (274 aa)). The G1 motif stretch occupies residues 43–50 (GDQSSGKS). Position 43–50 (43–50 (GDQSSGKS)) interacts with GTP. The interval 68–70 (VTR) is G2 motif. Residues 144 to 147 (DLPG) are G3 motif. GTP contacts are provided by residues 144–148 (DLPGI) and 213–216 (TKPD). The G4 motif stretch occupies residues 213 to 216 (TKPD). A G5 motif region spans residues 245 to 248 (KCRG). Residues 307–332 (LLEDQINSSHQSASEELQKYGADIPE) are bundle signaling element (BSE). The middle domain stretch occupies residues 332–499 (EDDRTRMSFL…HFQMEQIVYC (168 aa)). The tract at residues 333–601 (DDRTRMSFLV…TSKCSWFLEE (269 aa)) is stalk. Residues 520 to 522 (KTK) form a critical for lipid-binding region. The GED domain maps to 543-631 (TTEMTQHLKA…ARQKLAKFSD (89 aa)).

It belongs to the TRAFAC class dynamin-like GTPase superfamily. Dynamin/Fzo/YdjA family. As to quaternary structure, homooligomer. Oligomerizes into multimeric filamentous or ring-like structures by virtue of its stalk domain. Oligomerization is critical for GTPase activity, protein stability, and recognition of viral target structures. Interacts with TRPC1, TRPC3, TRPC4, TRPC5, TRPC6 and TRPC7. Interacts with HSPA5. Interacts with TUBB/TUBB5. Interacts with DDX39A and DDX39B. Post-translationally, ISGylated.

Its subcellular location is the cytoplasm. The protein localises to the nucleus. It is found in the endoplasmic reticulum membrane. It localises to the perinuclear region. Functionally, interferon-induced dynamin-like GTPase with antiviral activity against influenza A virus, (IAV), influenza B virus (IBV) and Thogoto virus (THOV). Inhibits FLUAV by interfering with the process of primary transcription, probably by affecting the viral polymerase function. The polypeptide is Interferon-induced GTP-binding protein Mx1 (Mx1) (Mus musculus (Mouse)).